Reading from the N-terminus, the 310-residue chain is Protein N-terminal asparagine amidohydrolase (310 aa).

In terms of assembly, monomer.

It localises to the cytoplasm. It carries out the reaction N-terminal L-asparaginyl-[protein] + H2O + H(+) = N-terminal L-aspartyl-[protein] + NH4(+). With respect to regulation, inhibited by micromolar concentrations of copper and zinc ions. Its function is as follows. N-terminal asparagine deamidase that mediates deamidation of N-terminal asparagine residues to aspartate. Required for the ubiquitin-dependent turnover of intracellular proteins that initiate with Met-Asn. These proteins are acetylated on the retained initiator methionine and can subsequently be modified by the removal of N-acetyl methionine by acylaminoacid hydrolase (AAH). Conversion of the resulting N-terminal asparagine to aspartate by NTAN1/PNAD renders the protein susceptible to arginylation, polyubiquitination and degradation as specified by the N-end rule. This enzyme does not act on substrates with internal or C-terminal asparagines and does not act on glutamine residues in any position, nor on acetylated N-terminal peptidyl Asn. The chain is Protein N-terminal asparagine amidohydrolase (NTAN1) from Homo sapiens (Human).